Consider the following 425-residue polypeptide: uncharacterized protein (425 aa).

An F-box domain is found at 2–53; sequence SFNLLDLPIVPRQKALKYLEPIDLFELSLCSKRMAQSVRDLKIEASAHFITL.

This is an uncharacterized protein from Caenorhabditis elegans.